Consider the following 459-residue polypeptide: MSDFDKLTPKQIVEELDKYIVGQSKAKKAVAIAIRNRIRRQKLSEEWKKEITPKNILMIGPTGVGKTEIARRLAQLSGSPFLKIEATRFTEVGYVGKNVDSMIRELVEIAVNMVKQQKMKEVEEKAKLNVEERILDALVPMKKKTQIPFANIFGMQMEKPQQTDDYSENLRKREELRRRLRSGELDNEEIEIEIETSNSPIGFIGLPEMEDIGMDLSNVIGNIFPKQKKRRKMKISEAKKVLLPIEEEKLIDMDETIQTALELAQNRGIIFIDEMDKIAAKTGSSGQDVSRQGVQRDLLPIVEGTTITTKYGPVKTDYILFIAAGAFHVSKPSDLIPELQGRFPIRVELEPLKEEDFVRILVEPENALTKQYQALLYTENVQLEFTDDGIKELARVSYKLNQKLENIGARRLYTVLEKVLEDVLFEAPEIEEKIIVDADYVTKKLKGIIEDEDLTSYIL.

ATP contacts are provided by residues V21, 63 to 68, D273, E338, and R410; that span reads GVGKTE.

It belongs to the ClpX chaperone family. HslU subfamily. As to quaternary structure, a double ring-shaped homohexamer of HslV is capped on each side by a ring-shaped HslU homohexamer. The assembly of the HslU/HslV complex is dependent on binding of ATP.

The protein localises to the cytoplasm. Functionally, ATPase subunit of a proteasome-like degradation complex; this subunit has chaperone activity. The binding of ATP and its subsequent hydrolysis by HslU are essential for unfolding of protein substrates subsequently hydrolyzed by HslV. HslU recognizes the N-terminal part of its protein substrates and unfolds these before they are guided to HslV for hydrolysis. The sequence is that of ATP-dependent protease ATPase subunit HslU from Thermosipho africanus (strain TCF52B).